We begin with the raw amino-acid sequence, 434 residues long: Histidinol dehydrogenase (434 aa).

Positions 130, 191, and 214 each coordinate NAD(+). Substrate contacts are provided by S237, Q259, and H262. Residues Q259 and H262 each contribute to the Zn(2+) site. Active-site proton acceptor residues include E327 and H328. Substrate contacts are provided by H328, D361, E415, and H420. D361 contacts Zn(2+). H420 is a binding site for Zn(2+).

It belongs to the histidinol dehydrogenase family. It depends on Zn(2+) as a cofactor.

It carries out the reaction L-histidinol + 2 NAD(+) + H2O = L-histidine + 2 NADH + 3 H(+). It functions in the pathway amino-acid biosynthesis; L-histidine biosynthesis; L-histidine from 5-phospho-alpha-D-ribose 1-diphosphate: step 9/9. Functionally, catalyzes the sequential NAD-dependent oxidations of L-histidinol to L-histidinaldehyde and then to L-histidine. The chain is Histidinol dehydrogenase from Chromobacterium violaceum (strain ATCC 12472 / DSM 30191 / JCM 1249 / CCUG 213 / NBRC 12614 / NCIMB 9131 / NCTC 9757 / MK).